We begin with the raw amino-acid sequence, 426 residues long: UPF0164 protein TP_0548 (426 aa).

An N-terminal signal peptide occupies residues 1–37 (MISCSVRRRPRWEPQVGAAFLAFALLPVLASGRGMQA).

This sequence belongs to the UPF0164 family.

This is UPF0164 protein TP_0548 from Treponema pallidum (strain Nichols).